We begin with the raw amino-acid sequence, 348 residues long: Tetraacyldisaccharide 4'-kinase (348 aa).

T54 to T61 serves as a coordination point for ATP.

This sequence belongs to the LpxK family.

The enzyme catalyses a lipid A disaccharide + ATP = a lipid IVA + ADP + H(+). Its pathway is glycolipid biosynthesis; lipid IV(A) biosynthesis; lipid IV(A) from (3R)-3-hydroxytetradecanoyl-[acyl-carrier-protein] and UDP-N-acetyl-alpha-D-glucosamine: step 6/6. Its function is as follows. Transfers the gamma-phosphate of ATP to the 4'-position of a tetraacyldisaccharide 1-phosphate intermediate (termed DS-1-P) to form tetraacyldisaccharide 1,4'-bis-phosphate (lipid IVA). The chain is Tetraacyldisaccharide 4'-kinase from Agrobacterium fabrum (strain C58 / ATCC 33970) (Agrobacterium tumefaciens (strain C58)).